The following is a 117-amino-acid chain: Ribosome-binding factor A (117 aa).

It belongs to the RbfA family. As to quaternary structure, monomer. Binds 30S ribosomal subunits, but not 50S ribosomal subunits or 70S ribosomes.

The protein resides in the cytoplasm. Its function is as follows. One of several proteins that assist in the late maturation steps of the functional core of the 30S ribosomal subunit. Associates with free 30S ribosomal subunits (but not with 30S subunits that are part of 70S ribosomes or polysomes). Required for efficient processing of 16S rRNA. May interact with the 5'-terminal helix region of 16S rRNA. The sequence is that of Ribosome-binding factor A from Leuconostoc mesenteroides subsp. mesenteroides (strain ATCC 8293 / DSM 20343 / BCRC 11652 / CCM 1803 / JCM 6124 / NCDO 523 / NBRC 100496 / NCIMB 8023 / NCTC 12954 / NRRL B-1118 / 37Y).